A 422-amino-acid chain; its full sequence is MACRSCVVGFSSLSSCEVTPAGSPRPATAGWSSCGPPEPGLSSHSLTGCWTAGTVSKVTVNPSLLVPLDLKVDPAIQQQKNNEKEEMKVLNDKFASLIGKVQALEQRNQLLETRWHFLQSQDSATFDLGHLYEEYQGRLQEELRKVSKERGQLEANLLQVLEKVEDFRIRYEDEISKRTDMEFTFVQLKKDLDAECLRRTELETKLKGLQSFVELMKSIYEQELKDLAAQLKDVSVTVGMDSRCHIDLSGIVEEVKAQYDAVAARSLEEAEAYSRSQLEERAACSAEFENSLQSSRSEIADLNVRIQKLRSQILSIKSHCLKLEENIKVAEEQGELAFQDAKAKLAQLEDALQQAKKDMARQLREYQELMNTKLALDIEIATYRKLMEGEESRMDMPSATVVSAVQARCRTAPTLPHPLCSL.

Positions 1-82 (MACRSCVVGF…DPAIQQQKNN (82 aa)) are head. Residue Ser45 is modified to Phosphoserine. The segment at 83–118 (EKEEMKVLNDKFASLIGKVQALEQRNQLLETRWHFL) is coil 1A. Residues 83-394 (EKEEMKVLND…KLMEGEESRM (312 aa)) enclose the IF rod domain. Residues 119 to 135 (QSQDSATFDLGHLYEEY) form a linker 1 region. Residues 136–227 (QGRLQEELRK…SIYEQELKDL (92 aa)) are coil 1B. The interval 228-251 (AAQLKDVSVTVGMDSRCHIDLSGI) is linker 12. The coil 2 stretch occupies residues 252–390 (VEEVKAQYDA…ATYRKLMEGE (139 aa)). Residues 391–422 (ESRMDMPSATVVSAVQARCRTAPTLPHPLCSL) are tail.

This sequence belongs to the intermediate filament family. As to quaternary structure, heterotetramer of two type I and two type II keratins.

This Bos taurus (Bovine) protein is Keratin, type II cytoskeletal 80 (KRT80).